A 728-amino-acid chain; its full sequence is Catalase-peroxidase 1 (728 aa).

Residues 1–22 form the signal peptide; that stretch reads MDKTQSSQGKCPVMHGANSAVA. A cross-link (tryptophyl-tyrosyl-methioninium (Trp-Tyr) (with M-251)) is located at residues 97–225; that stretch reads WHSAGTYRVA…LAAVMMGLIY (129 aa). Histidine 98 functions as the Proton acceptor in the catalytic mechanism. Positions 225 to 251 form a cross-link, tryptophyl-tyrosyl-methioninium (Tyr-Met) (with W-97); it reads YVNPEGVDGKPDPLRTAQDVRVTFARM. Residue histidine 266 coordinates heme b.

The protein belongs to the peroxidase family. Peroxidase/catalase subfamily. Homodimer or homotetramer. Requires heme b as cofactor. Formation of the three residue Trp-Tyr-Met cross-link is important for the catalase, but not the peroxidase activity of the enzyme.

The catalysed reaction is H2O2 + AH2 = A + 2 H2O. It carries out the reaction 2 H2O2 = O2 + 2 H2O. Functionally, bifunctional enzyme with both catalase and broad-spectrum peroxidase activity. The protein is Catalase-peroxidase 1 of Shewanella sp. (strain MR-7).